The chain runs to 162 residues: Peptide deformylase-like (162 aa).

Belongs to the polypeptide deformylase family.

The sequence is that of Peptide deformylase-like from Staphylococcus aureus (strain MRSA252).